The sequence spans 103 residues: Putative membrane protein insertion efficiency factor (103 aa).

The segment at 68-103 (HEGGYDPVPLAKQDAKPENNSESESLLNQPTETKSL) is disordered. Polar residues predominate over residues 87–103 (NSESESLLNQPTETKSL).

Belongs to the UPF0161 family.

Its subcellular location is the cell inner membrane. Its function is as follows. Could be involved in insertion of integral membrane proteins into the membrane. The chain is Putative membrane protein insertion efficiency factor from Idiomarina loihiensis (strain ATCC BAA-735 / DSM 15497 / L2-TR).